Here is a 476-residue protein sequence, read N- to C-terminus: Glutamate--tRNA ligase 1 (476 aa).

The 'HIGH' region signature appears at 9-19 (PSPTGFLHIGG). Positions 238–242 (KLSKR) match the 'KMSKS' region motif. Residue Lys241 coordinates ATP.

It belongs to the class-I aminoacyl-tRNA synthetase family. Glutamate--tRNA ligase type 1 subfamily. In terms of assembly, monomer.

The protein localises to the cytoplasm. It carries out the reaction tRNA(Glu) + L-glutamate + ATP = L-glutamyl-tRNA(Glu) + AMP + diphosphate. Its function is as follows. Catalyzes the attachment of glutamate to tRNA(Glu) in a two-step reaction: glutamate is first activated by ATP to form Glu-AMP and then transferred to the acceptor end of tRNA(Glu). This Bartonella tribocorum (strain CIP 105476 / IBS 506) protein is Glutamate--tRNA ligase 1.